The chain runs to 238 residues: Glycerol uptake facilitator protein 4 (238 aa).

The next 2 membrane-spanning stretches (helical) occupy residues 2–22 (IHQLLAEFMGTALMIIFGVGV) and 39–59 (IFAITTWGFGITIALFIFGNV). Positions 62 to 64 (NPA) match the NPA 1 motif. 3 helical membrane passes run 80–100 (FIPYSVAEVLGGVVGAVIVWI), 135–155 (FFVEFFDTFIFISGILAISEV), and 158–178 (PGIVPIGVGLLVWAIGMGLGG). The NPA 2 motif lies at 185–187 (NLA). Residues 211 to 231 (YGIIVPGIAPFVGAACAALFM) traverse the membrane as a helical segment.

This sequence belongs to the MIP/aquaporin (TC 1.A.8) family.

It is found in the cell membrane. Functionally, transporter that facilitates the transmembrane diffusion of water, dihydroxyacetone, glycerol, urea, H(2)O(2) and D/L-lactic acid. Is involved in the cellular racemization of lactate and lactate metabolism, but has likely a more general physiological role. The transported molecule is indeed lactic acid and not the lactate anion, in agreement with the assumption that, with very few exceptions, MIPs (major intrinsic proteins) only facilitate the transport of uncharged solutes. The chain is Glycerol uptake facilitator protein 4 from Lactiplantibacillus plantarum (strain ATCC BAA-793 / NCIMB 8826 / WCFS1) (Lactobacillus plantarum).